The primary structure comprises 289 residues: ATP synthase gamma chain (289 aa).

It belongs to the ATPase gamma chain family. F-type ATPases have 2 components, CF(1) - the catalytic core - and CF(0) - the membrane proton channel. CF(1) has five subunits: alpha(3), beta(3), gamma(1), delta(1), epsilon(1). CF(0) has three main subunits: a, b and c.

It localises to the cell inner membrane. Its function is as follows. Produces ATP from ADP in the presence of a proton gradient across the membrane. The gamma chain is believed to be important in regulating ATPase activity and the flow of protons through the CF(0) complex. The polypeptide is ATP synthase gamma chain (Leptospira biflexa serovar Patoc (strain Patoc 1 / ATCC 23582 / Paris)).